Reading from the N-terminus, the 517-residue chain is Apolipoprotein N-acyltransferase (517 aa).

The next 7 helical transmembrane spans lie at 5–25 (SFFS…ATLT), 26–46 (FAPY…LWLL), 55–75 (GLIG…WVHV), 90–110 (FLMS…GALF), 128–148 (VIWL…PWLW), 162–182 (APIL…GALV), and 193–213 (LMVP…SWVV). In terms of domain architecture, CN hydrolase spans 225 to 471 (IQGNVPQELK…TAVLRATITP (247 aa)). Glutamate 264 functions as the Proton acceptor in the catalytic mechanism. Lysine 330 is an active-site residue. Cysteine 382 acts as the Nucleophile in catalysis.

Belongs to the CN hydrolase family. Apolipoprotein N-acyltransferase subfamily.

It localises to the cell inner membrane. The catalysed reaction is N-terminal S-1,2-diacyl-sn-glyceryl-L-cysteinyl-[lipoprotein] + a glycerophospholipid = N-acyl-S-1,2-diacyl-sn-glyceryl-L-cysteinyl-[lipoprotein] + a 2-acyl-sn-glycero-3-phospholipid + H(+). The protein operates within protein modification; lipoprotein biosynthesis (N-acyl transfer). In terms of biological role, catalyzes the phospholipid dependent N-acylation of the N-terminal cysteine of apolipoprotein, the last step in lipoprotein maturation. The chain is Apolipoprotein N-acyltransferase from Photobacterium profundum (strain SS9).